A 182-amino-acid chain; its full sequence is Protein Syd (182 aa).

The protein belongs to the Syd family.

Its subcellular location is the cell inner membrane. Interacts with the SecY protein in vivo. May bind preferentially to an uncomplexed state of SecY, thus functioning either as a chelating agent for excess SecY in the cell or as a regulatory factor that negatively controls the translocase function. The sequence is that of Protein Syd from Pectobacterium carotovorum subsp. carotovorum (strain PC1).